Consider the following 85-residue polypeptide: Large ribosomal subunit protein bL31 (85 aa).

The interval 65 to 85 (YGMGGAGKAGEDKKAGDKADA) is disordered. Basic and acidic residues predominate over residues 73-85 (AGEDKKAGDKADA).

It belongs to the bacterial ribosomal protein bL31 family. Type A subfamily. As to quaternary structure, part of the 50S ribosomal subunit.

Functionally, binds the 23S rRNA. The chain is Large ribosomal subunit protein bL31 from Synechococcus sp. (strain WH7803).